The following is a 146-amino-acid chain: D-aminoacyl-tRNA deacylase (146 aa).

The short motif at 137–138 (GP) is the Gly-cisPro motif, important for rejection of L-amino acids element.

It belongs to the DTD family. As to quaternary structure, homodimer.

It localises to the cytoplasm. The catalysed reaction is glycyl-tRNA(Ala) + H2O = tRNA(Ala) + glycine + H(+). It catalyses the reaction a D-aminoacyl-tRNA + H2O = a tRNA + a D-alpha-amino acid + H(+). Its function is as follows. An aminoacyl-tRNA editing enzyme that deacylates mischarged D-aminoacyl-tRNAs. Also deacylates mischarged glycyl-tRNA(Ala), protecting cells against glycine mischarging by AlaRS. Acts via tRNA-based rather than protein-based catalysis; rejects L-amino acids rather than detecting D-amino acids in the active site. By recycling D-aminoacyl-tRNA to D-amino acids and free tRNA molecules, this enzyme counteracts the toxicity associated with the formation of D-aminoacyl-tRNA entities in vivo and helps enforce protein L-homochirality. The protein is D-aminoacyl-tRNA deacylase of Hahella chejuensis (strain KCTC 2396).